Here is a 401-residue protein sequence, read N- to C-terminus: Exodeoxyribonuclease 7 large subunit (401 aa).

This sequence belongs to the XseA family. As to quaternary structure, heterooligomer composed of large and small subunits.

It is found in the cytoplasm. It catalyses the reaction Exonucleolytic cleavage in either 5'- to 3'- or 3'- to 5'-direction to yield nucleoside 5'-phosphates.. In terms of biological role, bidirectionally degrades single-stranded DNA into large acid-insoluble oligonucleotides, which are then degraded further into small acid-soluble oligonucleotides. This is Exodeoxyribonuclease 7 large subunit from Syntrophotalea carbinolica (strain DSM 2380 / NBRC 103641 / GraBd1) (Pelobacter carbinolicus).